A 507-amino-acid polypeptide reads, in one-letter code: Maturase K (507 aa).

This sequence belongs to the intron maturase 2 family. MatK subfamily.

It is found in the plastid. The protein localises to the chloroplast. Functionally, usually encoded in the trnK tRNA gene intron. Probably assists in splicing its own and other chloroplast group II introns. The chain is Maturase K from Ranunculus acris (Meadow buttercup).